The following is a 35-amino-acid chain: Probable endonuclease 4 (35 aa).

Glu15 contacts Zn(2+).

The protein belongs to the AP endonuclease 2 family. Zn(2+) is required as a cofactor.

It carries out the reaction Endonucleolytic cleavage to 5'-phosphooligonucleotide end-products.. In terms of biological role, endonuclease IV plays a role in DNA repair. It cleaves phosphodiester bonds at apurinic or apyrimidinic (AP) sites, generating a 3'-hydroxyl group and a 5'-terminal sugar phosphate. The protein is Probable endonuclease 4 (nfo) of Yersinia enterocolitica.